A 193-amino-acid polypeptide reads, in one-letter code: MTIKLIVGLANPGNKYLLTRHNVGSWYVNQLANNYHVSLINKSSFLGYTGYLNIGKRRIFLLIPTIFMNYNGQAVAAIAKFYNIMPEEILIAHDELNFLPGYARFKYSGGHGGHNGLKDVIYRLGDNNNFYRLRIGIGHPGDKNKVIKFVLDTPLDTEQQLIQHAINESVLCTSLMFQQNIAYAIHQLHTILK.

Y16 contributes to the tRNA binding site. The active-site Proton acceptor is the H21. The tRNA site is built by F67, N69, and N115.

Belongs to the PTH family. In terms of assembly, monomer.

Its subcellular location is the cytoplasm. The catalysed reaction is an N-acyl-L-alpha-aminoacyl-tRNA + H2O = an N-acyl-L-amino acid + a tRNA + H(+). Functionally, hydrolyzes ribosome-free peptidyl-tRNAs (with 1 or more amino acids incorporated), which drop off the ribosome during protein synthesis, or as a result of ribosome stalling. Its function is as follows. Catalyzes the release of premature peptidyl moieties from peptidyl-tRNA molecules trapped in stalled 50S ribosomal subunits, and thus maintains levels of free tRNAs and 50S ribosomes. The sequence is that of Peptidyl-tRNA hydrolase from Baumannia cicadellinicola subsp. Homalodisca coagulata.